The primary structure comprises 270 residues: Protein-ADP-ribose hydrolase (270 aa).

A Macro domain is found at 73–267; the sequence is VSVKDCQKTN…LYDTYLQKEN (195 aa). The ADP-D-ribose site is built by D92, I93, and N106. Zn(2+)-binding residues include C112, H117, and C119. ADP-D-ribose is bound by residues C119, I120, D121, S212, T213, G214, E215, and F216.

It belongs to the MacroD-type family. Zn-Macro subfamily. Requires Zn(2+) as cofactor.

It catalyses the reaction 4-O-(ADP-D-ribosyl)-L-aspartyl-[protein] + H2O = L-aspartyl-[protein] + ADP-D-ribose + H(+). ADP-ribosylhydrolase that specifically reverses the SirTM-mediated mono-ADP-ribosylation at an asparatate residue of GcvH-L, by releasing ADP-ribose from the target protein. May play a role in the regulation of the response to host-induced oxidative stress. This chain is Protein-ADP-ribose hydrolase, found in Streptococcus pyogenes serotype M3 (strain ATCC BAA-595 / MGAS315).